A 548-amino-acid chain; its full sequence is Guanine nucleotide-binding protein-like 3 (548 aa).

A compositionally biased stretch (basic residues) spans 1–45 (MKRPKLKKGSKRLSCHKRYKIQKKVREHNRKARKEAKKSGTRKQK). The segment at 1 to 118 (MKRPKLKKGS…KKNKGTKAAE (118 aa)) is disordered. Residues 58 to 114 (AEILQEAQRRRQQEEELKQNRKLERQKEVAKRRKLDEKKKKNSEKREKRDNKKNKGT) are a coiled coil. Basic and acidic residues predominate over residues 64-107 (AQRRRQQEEELKQNRKLERQKEVAKRRKLDEKKKKNSEKREKRD). The CP-type G domain maps to 125–305 (CRHVNKVLEQ…MLDSPALVVS (181 aa)). GTP contacts are provided by residues 172 to 175 (NKAD), 256 to 263 (ANVGKSSV), and 298 to 301 (DSPA). The interval 459-548 (RQLVEPEPIE…DAYDFNTDFV (90 aa)) is disordered. A compositionally biased stretch (acidic residues) spans 465 to 497 (EPIEEELEANDGEEDVEEEHEGSEEEEDEEVEQ). Residues 501-523 (SAKEQEVVSAKEQEVVSAKEQDS) show a composition bias toward basic and acidic residues. Residues 524 to 534 (KSAGPSVSFDQ) show a composition bias toward polar residues.

Belongs to the TRAFAC class YlqF/YawG GTPase family.

It localises to the nucleus. The protein resides in the nucleolus. In terms of biological role, may play a role in regulating cellular proliferation. This Xenopus tropicalis (Western clawed frog) protein is Guanine nucleotide-binding protein-like 3 (gnl3).